Consider the following 335-residue polypeptide: uncharacterized protein (335 aa).

Solcar repeat units follow at residues 22-129 (VKPI…LLPL), 134-227 (GFPA…IRLF), and 244-327 (KDLY…TKKY). 6 consecutive transmembrane segments (helical) span residues 28–48 (MLSA…LDVV), 104–123 (GLVP…FLGY), 133–154 (WGFP…ATIV), 195–219 (GILN…FYWW), 246–263 (LYIN…ATLL), and 307–323 (CVKV…SYHL).

Belongs to the mitochondrial carrier (TC 2.A.29) family.

It localises to the mitochondrion inner membrane. This is an uncharacterized protein from Schizosaccharomyces pombe (strain 972 / ATCC 24843) (Fission yeast).